Reading from the N-terminus, the 169-residue chain is Small ribosomal subunit protein uS5c (169 aa).

Residues tryptophan 17–isoleucine 80 form the S5 DRBM domain.

The protein belongs to the universal ribosomal protein uS5 family. As to quaternary structure, part of the 30S ribosomal subunit. Contacts protein S4.

The protein localises to the plastid. Its subcellular location is the chloroplast. Its function is as follows. With S4 and S12 plays an important role in translational accuracy. This chain is Small ribosomal subunit protein uS5c (rps5), found in Guillardia theta (Cryptophyte).